A 602-amino-acid chain; its full sequence is Carbon catabolite repressor protein 4 homolog 1 (602 aa).

Residues 113-136 (ASAATEGNDEEELPRLNSSGSGSG) are disordered. Glutamate 299 is a binding site for Mg(2+).

It belongs to the CCR4/nocturin family. As to quaternary structure, component of the CCR4-NOT complex, at least composed of CRR4 and CAF1 proteins. Mg(2+) is required as a cofactor.

The protein localises to the nucleus. The protein resides in the cytoplasm. The enzyme catalyses Exonucleolytic cleavage of poly(A) to 5'-AMP.. In terms of biological role, acts as a catalytic component of the CCR4-NOT core complex, which in the nucleus seems to be a general transcription factor, and in the cytoplasm the major mRNA deadenylase involved in mRNA turnover. The protein is Carbon catabolite repressor protein 4 homolog 1 (CCR4-1) of Arabidopsis thaliana (Mouse-ear cress).